Reading from the N-terminus, the 443-residue chain is Methyl-coenzyme M reductase II subunit beta (443 aa).

Tyr367 is a coenzyme M binding site. Residue Gly369 participates in coenzyme B binding.

It belongs to the methyl-coenzyme M reductase beta subunit family. As to quaternary structure, MCR is a hexamer of two alpha, two beta, and two gamma chains, forming a dimer of heterotrimers. Coenzyme F430 serves as cofactor.

The catalysed reaction is coenzyme B + methyl-coenzyme M = methane + coenzyme M-coenzyme B heterodisulfide. Its pathway is one-carbon metabolism; methyl-coenzyme M reduction; methane from methyl-coenzyme M: step 1/1. Component of the methyl-coenzyme M reductase (MCR) I that catalyzes the reductive cleavage of methyl-coenzyme M (CoM-S-CH3 or 2-(methylthio)ethanesulfonate) using coenzyme B (CoB or 7-mercaptoheptanoylthreonine phosphate) as reductant which results in the production of methane and the mixed heterodisulfide of CoB and CoM (CoM-S-S-CoB). This is the final step in methanogenesis. This is Methyl-coenzyme M reductase II subunit beta (mrtB) from Methanothermus fervidus (strain ATCC 43054 / DSM 2088 / JCM 10308 / V24 S).